Here is a 160-residue protein sequence, read N- to C-terminus: Ribonuclease P protein component 2 (160 aa).

Belongs to the eukaryotic/archaeal RNase P protein component 2 family. Consists of a catalytic RNA component and at least 4-5 protein subunits.

It localises to the cytoplasm. It carries out the reaction Endonucleolytic cleavage of RNA, removing 5'-extranucleotides from tRNA precursor.. Functionally, part of ribonuclease P, a protein complex that generates mature tRNA molecules by cleaving their 5'-ends. This chain is Ribonuclease P protein component 2, found in Methanoculleus marisnigri (strain ATCC 35101 / DSM 1498 / JR1).